The chain runs to 428 residues: MLDPKFLRNELEVTAERLATRGFILDIAHLTQLEEKRKLLQVATEELQASRNAISKSIGQAKARGEDVEAIMAQVGDLGSQLDARKIELAAVLEEVNAIAMSMPNLPDESAPIGADETENVEVRRWGTPRTFNFPIKDHIDLGEGLNGLDFKNAVKITGSRFIVMKGQVARLNRAIGQFMLDLHTIEHGYTEAYVPLLVNEASLLGTGQLPKFGEDLFHTKPATEEGQGLSLIPTAEVPLTNLVRDSIVDEDELPIKLTAHTACFRSEAGSYGKDTRGLIRQHQFDKVEMVQIVKPEDSMAALEALTGHAETVLQRLGLPYRTVILCTGDMGFGSSKTYDIEVWLPAQNTYREISSCSNMKDFQARRMQARYRVKADNKPALLHTLNGSGLAVGRTLVAILENYQNADGSITIPEVLRPYMGGLTQIG.

Residue 235 to 237 coordinates L-serine; sequence TAE. 266–268 lines the ATP pocket; that stretch reads RSE. L-serine is bound at residue glutamate 289. 353-356 contributes to the ATP binding site; the sequence is EISS. Serine 389 provides a ligand contact to L-serine.

It belongs to the class-II aminoacyl-tRNA synthetase family. Type-1 seryl-tRNA synthetase subfamily. Homodimer. The tRNA molecule binds across the dimer.

It is found in the cytoplasm. It catalyses the reaction tRNA(Ser) + L-serine + ATP = L-seryl-tRNA(Ser) + AMP + diphosphate + H(+). The catalysed reaction is tRNA(Sec) + L-serine + ATP = L-seryl-tRNA(Sec) + AMP + diphosphate + H(+). It participates in aminoacyl-tRNA biosynthesis; selenocysteinyl-tRNA(Sec) biosynthesis; L-seryl-tRNA(Sec) from L-serine and tRNA(Sec): step 1/1. Catalyzes the attachment of serine to tRNA(Ser). Is also able to aminoacylate tRNA(Sec) with serine, to form the misacylated tRNA L-seryl-tRNA(Sec), which will be further converted into selenocysteinyl-tRNA(Sec). This Shewanella baltica (strain OS223) protein is Serine--tRNA ligase.